The chain runs to 536 residues: CTP synthase (536 aa).

Positions 1 to 268 (MSTKYVFVTG…DNLVCEKLHL (268 aa)) are amidoligase domain. CTP is bound at residue serine 14. Serine 14 provides a ligand contact to UTP. ATP is bound at residue 15–20 (ALGKGI). Tyrosine 55 provides a ligand contact to L-glutamine. Aspartate 72 contacts ATP. Aspartate 72 and glutamate 142 together coordinate Mg(2+). CTP-binding positions include 149 to 151 (DIE), 189 to 194 (KTKPTQ), and lysine 225. Residues 189–194 (KTKPTQ) and lysine 225 each bind UTP. The region spanning 293 to 535 (KIALVGKYVE…IKAALEENKS (243 aa)) is the Glutamine amidotransferase type-1 domain. Glycine 355 provides a ligand contact to L-glutamine. The active-site Nucleophile; for glutamine hydrolysis is cysteine 382. L-glutamine contacts are provided by residues 383–386 (LGMQ), glutamate 406, and arginine 463. Catalysis depends on residues histidine 508 and glutamate 510.

It belongs to the CTP synthase family. Homotetramer.

It carries out the reaction UTP + L-glutamine + ATP + H2O = CTP + L-glutamate + ADP + phosphate + 2 H(+). The enzyme catalyses L-glutamine + H2O = L-glutamate + NH4(+). It catalyses the reaction UTP + NH4(+) + ATP = CTP + ADP + phosphate + 2 H(+). Its pathway is pyrimidine metabolism; CTP biosynthesis via de novo pathway; CTP from UDP: step 2/2. Its activity is regulated as follows. Allosterically activated by GTP, when glutamine is the substrate; GTP has no effect on the reaction when ammonia is the substrate. The allosteric effector GTP functions by stabilizing the protein conformation that binds the tetrahedral intermediate(s) formed during glutamine hydrolysis. Inhibited by the product CTP, via allosteric rather than competitive inhibition. Catalyzes the ATP-dependent amination of UTP to CTP with either L-glutamine or ammonia as the source of nitrogen. Regulates intracellular CTP levels through interactions with the four ribonucleotide triphosphates. The chain is CTP synthase from Clostridium beijerinckii (strain ATCC 51743 / NCIMB 8052) (Clostridium acetobutylicum).